A 319-amino-acid polypeptide reads, in one-letter code: Cytochrome c biogenesis protein CcsA (319 aa).

7 helical membrane passes run 17-37 (TISI…LGGL), 44-64 (GMIV…ASSG), 68-88 (LSNL…LHTI), 143-163 (MLLS…ILII), 223-243 (VISL…VWAN), 257-271 (TWAF…IYLH), and 286-306 (VASI…LLGI).

This sequence belongs to the CcmF/CycK/Ccl1/NrfE/CcsA family. In terms of assembly, may interact with Ccs1.

The protein localises to the plastid. It localises to the chloroplast thylakoid membrane. Functionally, required during biogenesis of c-type cytochromes (cytochrome c6 and cytochrome f) at the step of heme attachment. The polypeptide is Cytochrome c biogenesis protein CcsA (Lolium perenne (Perennial ryegrass)).